We begin with the raw amino-acid sequence, 156 residues long: Small ribosomal subunit protein uS7 (156 aa).

The protein belongs to the universal ribosomal protein uS7 family. In terms of assembly, part of the 30S ribosomal subunit. Contacts proteins S9 and S11.

One of the primary rRNA binding proteins, it binds directly to 16S rRNA where it nucleates assembly of the head domain of the 30S subunit. Is located at the subunit interface close to the decoding center, probably blocks exit of the E-site tRNA. The sequence is that of Small ribosomal subunit protein uS7 from Shewanella baltica (strain OS223).